Consider the following 67-residue polypeptide: Epsilon-conotoxin TxVA (67 aa).

Residues 1-19 (MRCFPVFIILLLLIASAPC) form the signal peptide. Positions 20 to 50 (FDARTKTDDDVPLSSLRDNLKRTIRTRLNIR) are excised as a propeptide. 4-carboxyglutamate occurs at positions 51 and 54. Cystine bridges form between Cys52-Cys58 and Cys53-Cys59. Trp57 carries the post-translational modification 6'-bromotryptophan. Thr60 is a glycosylation site (O-linked (GalNAc...) threonine). Pro63 carries the 4-hydroxyproline modification. A propeptide spanning residues 64 to 67 (LTGR) is cleaved from the precursor.

O-glycan consists of the disaccharide Gal-GalNAc. Expressed by the venom duct.

The protein localises to the secreted. Functionally, epsilon-conotoxins act at presynaptic membranes, blocking the calcium channels or G protein-coupled receptors. Causes hyperactivity upon intracranial injection into mice. Causes dorsal fins drooping in fish. The polypeptide is Epsilon-conotoxin TxVA (Conus textile (Cloth-of-gold cone)).